The chain runs to 117 residues: Large ribosomal subunit protein bL20c (117 aa).

It belongs to the bacterial ribosomal protein bL20 family.

Its subcellular location is the plastid. It localises to the chloroplast. Functionally, binds directly to 23S ribosomal RNA and is necessary for the in vitro assembly process of the 50S ribosomal subunit. It is not involved in the protein synthesizing functions of that subunit. The polypeptide is Large ribosomal subunit protein bL20c (Citrus sinensis (Sweet orange)).